The primary structure comprises 499 residues: Probable cytosol aminopeptidase (499 aa).

Positions 271 and 276 each coordinate Mn(2+). Residue K283 is part of the active site. Mn(2+)-binding residues include D294, D353, and E355. R357 is a catalytic residue.

This sequence belongs to the peptidase M17 family. It depends on Mn(2+) as a cofactor.

Its subcellular location is the cytoplasm. It carries out the reaction Release of an N-terminal amino acid, Xaa-|-Yaa-, in which Xaa is preferably Leu, but may be other amino acids including Pro although not Arg or Lys, and Yaa may be Pro. Amino acid amides and methyl esters are also readily hydrolyzed, but rates on arylamides are exceedingly low.. It catalyses the reaction Release of an N-terminal amino acid, preferentially leucine, but not glutamic or aspartic acids.. In terms of biological role, presumably involved in the processing and regular turnover of intracellular proteins. Catalyzes the removal of unsubstituted N-terminal amino acids from various peptides. The protein is Probable cytosol aminopeptidase of Bordetella parapertussis (strain 12822 / ATCC BAA-587 / NCTC 13253).